Here is a 372-residue protein sequence, read N- to C-terminus: Chaperone protein DnaJ (372 aa).

Residues 5–69 (DYYEVLGLTK…QKKARYDQFG (65 aa)) enclose the J domain. The segment at 129–211 (GKETEIEIPK…CRGEGKVQKR (83 aa)) adopts a CR-type zinc-finger fold. Zn(2+)-binding residues include Cys-142, Cys-145, Cys-159, Cys-162, Cys-185, Cys-188, Cys-199, and Cys-202. CXXCXGXG motif repeat units lie at residues 142 to 149 (CETCHGSG), 159 to 166 (CSTCNGAG), 185 to 192 (CTTCHGTG), and 199 to 206 (CSTCRGEG).

This sequence belongs to the DnaJ family. Homodimer. It depends on Zn(2+) as a cofactor.

It is found in the cytoplasm. Functionally, participates actively in the response to hyperosmotic and heat shock by preventing the aggregation of stress-denatured proteins and by disaggregating proteins, also in an autonomous, DnaK-independent fashion. Unfolded proteins bind initially to DnaJ; upon interaction with the DnaJ-bound protein, DnaK hydrolyzes its bound ATP, resulting in the formation of a stable complex. GrpE releases ADP from DnaK; ATP binding to DnaK triggers the release of the substrate protein, thus completing the reaction cycle. Several rounds of ATP-dependent interactions between DnaJ, DnaK and GrpE are required for fully efficient folding. Also involved, together with DnaK and GrpE, in the DNA replication of plasmids through activation of initiation proteins. The sequence is that of Chaperone protein DnaJ from Lysinibacillus sphaericus (strain C3-41).